The chain runs to 240 residues: 4-hydroxy-tetrahydrodipicolinate reductase (240 aa).

NAD(+) contacts are provided by residues 79–81 (ATT) and 103–106 (SANM). Residue His135 is the Proton donor/acceptor of the active site. Residue His136 participates in (S)-2,3,4,5-tetrahydrodipicolinate binding. Residue Lys139 is the Proton donor of the active site. 145 to 146 (GT) is a binding site for (S)-2,3,4,5-tetrahydrodipicolinate.

The protein belongs to the DapB family.

The protein resides in the cytoplasm. The enzyme catalyses (S)-2,3,4,5-tetrahydrodipicolinate + NAD(+) + H2O = (2S,4S)-4-hydroxy-2,3,4,5-tetrahydrodipicolinate + NADH + H(+). It catalyses the reaction (S)-2,3,4,5-tetrahydrodipicolinate + NADP(+) + H2O = (2S,4S)-4-hydroxy-2,3,4,5-tetrahydrodipicolinate + NADPH + H(+). It participates in amino-acid biosynthesis; L-lysine biosynthesis via DAP pathway; (S)-tetrahydrodipicolinate from L-aspartate: step 4/4. Catalyzes the conversion of 4-hydroxy-tetrahydrodipicolinate (HTPA) to tetrahydrodipicolinate. The protein is 4-hydroxy-tetrahydrodipicolinate reductase of Staphylococcus aureus (strain MRSA252).